The sequence spans 38 residues: Photosystem II reaction center protein L (38 aa).

A helical transmembrane segment spans residues 17–37 (SLFWGLLLIFILAVLFSSYFF).

Belongs to the PsbL family. In terms of assembly, PSII is composed of 1 copy each of membrane proteins PsbA, PsbB, PsbC, PsbD, PsbE, PsbF, PsbH, PsbI, PsbJ, PsbK, PsbL, PsbM, PsbT, PsbX, PsbY, PsbZ, Psb30/Ycf12, at least 3 peripheral proteins of the oxygen-evolving complex and a large number of cofactors. It forms dimeric complexes.

Its subcellular location is the plastid. The protein localises to the chloroplast thylakoid membrane. One of the components of the core complex of photosystem II (PSII). PSII is a light-driven water:plastoquinone oxidoreductase that uses light energy to abstract electrons from H(2)O, generating O(2) and a proton gradient subsequently used for ATP formation. It consists of a core antenna complex that captures photons, and an electron transfer chain that converts photonic excitation into a charge separation. This subunit is found at the monomer-monomer interface and is required for correct PSII assembly and/or dimerization. This is Photosystem II reaction center protein L from Guillardia theta (Cryptophyte).